Here is a 1124-residue protein sequence, read N- to C-terminus: Transient-receptor-potential-like protein (1124 aa).

The tract at residues 1–24 (MGRKKKLPTGVSSGVSHASSAPKS) is disordered. The Cytoplasmic segment spans residues 1–340 (MGRKKKLPTG…GFRRKSIVDK (340 aa)). Residues 10 to 21 (GVSSGVSHASSA) are compositionally biased toward low complexity. ANK repeat units follow at residues 40 to 69 (LEEK…RHQH), 78 to 107 (LGRR…ETKD), and 152 to 181 (PDIT…AVPV). Residues 341 to 361 (VICIAQVAVLFPLYCLIYMCA) traverse the membrane as a helical segment. Residues 362-373 (PNCRTGQLMRKP) lie on the Extracellular side of the membrane. A helical membrane pass occupies residues 374–394 (FMKFLIHASSYLFFLFILILV). The Cytoplasmic portion of the chain corresponds to 395–431 (SQRADDDFVRIFGTTRMKKELAEQELRQRGQTPSKLE). Residues 432 to 452 (LIVVMYVIGFVWEEVQEIFAV) traverse the membrane as a helical segment. The Extracellular segment spans residues 453–512 (GMKSYLRNMWNFIDFLRNSLYVSVMCLRAFAYIQQATEIARDPQMAYIPREKWHDFDPQL). Residues 513-533 (IAEGLFAAANVFSALKLVHLF) traverse the membrane as a helical segment. At 534–548 (SINPHLGPLQISLGR) the chain is on the cytoplasmic side. The helical transmembrane segment at 549 to 569 (MVIDIVKFFFIYTLVLFAFAC) threads the bilayer. Over 570–645 (GLNQLLWYFA…GIKSYTRFWG (76 aa)) the chain is Extracellular. The helical transmembrane segment at 646 to 666 (LLMFGSYSVINVIVLLNLLIA) threads the bilayer. The Cytoplasmic portion of the chain corresponds to 667–1124 (MMSNSYAMID…TSPQRPKHRN (458 aa)). Calmodulin-binding stretches follow at residues 710–728 (SVKW…IDRQ) and 853–895 (IPSK…SQIG). Disordered stretches follow at residues 978 to 1013 (RAMA…GVSH) and 1031 to 1124 (LIAN…KHRN). The span at 1035–1063 (SAPSAPTAPPKKSAPTAPTPTYKPTTHAP) shows a compositional bias: low complexity. Basic and acidic residues-rich tracts occupy residues 1069–1081 (GNRE…DGVR) and 1090–1106 (HVVD…RDNV). Over residues 1107-1118 (SDISSIASTSPQ) the composition is skewed to polar residues.

This sequence belongs to the transient receptor (TC 1.A.4) family. STrpC subfamily. In terms of assembly, forms heteromultimers with Trpgamma and, to a lower extent, with trp. Interacts with Fkbp59 in vivo and is found in the inaD signaling complex. Expressed predominantly in the rhabdomeres of photoreceptor cells.

The protein resides in the membrane. The protein localises to the cell projection. It is found in the rhabdomere membrane. Functionally, a light-sensitive calcium channel that is required for inositide-mediated Ca(2+) entry in the retina during phospholipase C (PLC)-mediated phototransduction. Required for vision in the dark and in dim light. Binds calmodulin. Trp and trpl act together in the light response, although it is unclear whether as heteromultimers or distinct units. Also forms a functional cation channel with Trpgamma. Activated by fatty acids, metabolic stress, inositols and GTP-binding proteins. This is Transient-receptor-potential-like protein (trpl) from Drosophila melanogaster (Fruit fly).